Here is a 188-residue protein sequence, read N- to C-terminus: dCTP deaminase (188 aa).

Residues 111–116 (KSTYAR), 135–137 (TLE), Gln156, Tyr170, Lys179, and Gln180 each bind dCTP. Glu137 acts as the Proton donor/acceptor in catalysis.

It belongs to the dCTP deaminase family. Homotrimer.

It carries out the reaction dCTP + H2O + H(+) = dUTP + NH4(+). Its pathway is pyrimidine metabolism; dUMP biosynthesis; dUMP from dCTP (dUTP route): step 1/2. Catalyzes the deamination of dCTP to dUTP. This is dCTP deaminase from Rickettsia canadensis (strain McKiel).